Here is a 558-residue protein sequence, read N- to C-terminus: Pyrethroid hydrolase Ces2a (558 aa).

Positions 1 to 26 (MPLARLPGWLCVVACGLLLLLQHVHG) are cleaved as a signal peptide. A disulfide bond links cysteine 95 and cysteine 122. Lysine 209 carries the post-translational modification N6-succinyllysine. Serine 227 acts as the Acyl-ester intermediate in catalysis. Asparagine 275 carries N-linked (GlcNAc...) asparagine glycosylation. Cysteine 279 and cysteine 290 form a disulfide bridge. An N6-succinyllysine modification is found at lysine 296. Glutamate 344 acts as the Charge relay system in catalysis. N-linked (GlcNAc...) asparagine glycosylation is present at asparagine 361. Histidine 456 (charge relay system) is an active-site residue.

The protein belongs to the type-B carboxylesterase/lipase family.

The protein resides in the microsome. The catalysed reaction is (-)-trans-permethrin + H2O = (3-phenoxyphenyl)methanol + (1S,3R)-3-(2,2-dichlorovinyl)-2,2-dimethylcyclopropanecarboxylate + H(+). It carries out the reaction all-trans-retinyl hexadecanoate + H2O = all-trans-retinol + hexadecanoate + H(+). Carboxylesterases that catalyzes the hydrolysis of pyrethroids pesticides. Hydrolyzes permethrin faster than cypermethrin. Hydrolyzes retinyl esters. The chain is Pyrethroid hydrolase Ces2a from Mus musculus (Mouse).